A 276-amino-acid chain; its full sequence is Undecaprenyl-diphosphatase (276 aa).

The next 7 helical transmembrane spans lie at 12–34 (LGIV…IVVG), 43–63 (TATA…MWEF), 85–105 (FNLL…ADLI), 108–128 (WLFN…IMLW), 185–205 (TEFS…YSLF), 218–238 (IFAI…RALL), and 249–269 (FAWY…LHLI).

The protein belongs to the UppP family.

It is found in the cell inner membrane. The catalysed reaction is di-trans,octa-cis-undecaprenyl diphosphate + H2O = di-trans,octa-cis-undecaprenyl phosphate + phosphate + H(+). Its function is as follows. Catalyzes the dephosphorylation of undecaprenyl diphosphate (UPP). Confers resistance to bacitracin. The chain is Undecaprenyl-diphosphatase from Ectopseudomonas mendocina (strain ymp) (Pseudomonas mendocina).